A 320-amino-acid polypeptide reads, in one-letter code: Taurine-binding periplasmic protein (320 aa).

The first 22 residues, 1–22 (MAISSRNTLLAALAFIAFQAQA), serve as a signal peptide directing secretion.

This sequence belongs to the bacterial solute-binding protein SsuA/TauA family.

It is found in the periplasm. In terms of biological role, part of a binding-protein-dependent transport system for taurine. The chain is Taurine-binding periplasmic protein (tauA) from Escherichia coli (strain K12).